Consider the following 449-residue polypeptide: UDP-N-acetylmuramoylalanine--D-glutamate ligase (449 aa).

119-125 (GTNGKTT) provides a ligand contact to ATP.

It belongs to the MurCDEF family.

Its subcellular location is the cytoplasm. It carries out the reaction UDP-N-acetyl-alpha-D-muramoyl-L-alanine + D-glutamate + ATP = UDP-N-acetyl-alpha-D-muramoyl-L-alanyl-D-glutamate + ADP + phosphate + H(+). It participates in cell wall biogenesis; peptidoglycan biosynthesis. In terms of biological role, cell wall formation. Catalyzes the addition of glutamate to the nucleotide precursor UDP-N-acetylmuramoyl-L-alanine (UMA). The protein is UDP-N-acetylmuramoylalanine--D-glutamate ligase of Lactococcus lactis subsp. cremoris (strain MG1363).